We begin with the raw amino-acid sequence, 347 residues long: N-acetyl-gamma-glutamyl-phosphate reductase (347 aa).

Cysteine 155 is an active-site residue.

It belongs to the NAGSA dehydrogenase family. Type 1 subfamily.

It localises to the cytoplasm. It carries out the reaction N-acetyl-L-glutamate 5-semialdehyde + phosphate + NADP(+) = N-acetyl-L-glutamyl 5-phosphate + NADPH + H(+). Its pathway is amino-acid biosynthesis; L-arginine biosynthesis; N(2)-acetyl-L-ornithine from L-glutamate: step 3/4. Functionally, catalyzes the NADPH-dependent reduction of N-acetyl-5-glutamyl phosphate to yield N-acetyl-L-glutamate 5-semialdehyde. The polypeptide is N-acetyl-gamma-glutamyl-phosphate reductase (Akkermansia muciniphila (strain ATCC BAA-835 / DSM 22959 / JCM 33894 / BCRC 81048 / CCUG 64013 / CIP 107961 / Muc)).